The following is a 305-amino-acid chain: Ribonuclease BN (305 aa).

Zn(2+) contacts are provided by H64, H66, D68, H69, H141, D212, and H270. D68 (proton acceptor) is an active-site residue.

This sequence belongs to the RNase Z family. RNase BN subfamily. Homodimer. Zn(2+) is required as a cofactor.

In terms of biological role, zinc phosphodiesterase, which has both exoribonuclease and endoribonuclease activities. The polypeptide is Ribonuclease BN (Enterobacter sp. (strain 638)).